The following is a 242-amino-acid chain: DnaJ homolog subfamily B member 6 (242 aa).

The region spanning 2-69 is the J domain; it reads VDYYEVLGVQ…KKRDIYDRYG (68 aa). The tract at residues 2–146 is interaction with HSP70; it reads VDYYEVLGVQ…TGSFFSTFSG (145 aa). Positions 119 to 242 are interaction with KRT18; the sequence is FEDFFGHRRG…KEQLLRLDNK (124 aa). Arg135 is modified (omega-N-methylarginine).

In terms of assembly, homooligomer. Interacts with BAG3, HSPB8 and STUB1. Interacts with ALKBH1. Interacts with HSP70, KRT18 and PTTG. As to expression, expressed in all tissues examined with highest expression in brain and retina and lower levels observed in testis, spleen, heart, liver and kidney.

The protein resides in the cytoplasm. Its subcellular location is the perinuclear region. It localises to the nucleus. It is found in the myofibril. The protein localises to the sarcomere. The protein resides in the z line. Functionally, has a stimulatory effect on the ATPase activity of HSP70 in a dose-dependent and time-dependent manner and hence acts as a co-chaperone of HSP70. Plays an indispensable role in the organization of KRT8/KRT18 filaments. Acts as an endogenous molecular chaperone for neuronal proteins including huntingtin. Suppresses aggregation and toxicity of polyglutamine-containing, aggregation-prone proteins. Also reduces cellular toxicity and caspase-3 activity. This Bos taurus (Bovine) protein is DnaJ homolog subfamily B member 6 (DNAJB6).